A 346-amino-acid polypeptide reads, in one-letter code: Fusaric acid resistance protein FusC (346 aa).

Helical transmembrane passes span V10–G30, V248–V268, M291–P311, and G315–L335.

The protein belongs to the aromatic acid exporter ArAE (TC 2.A.85) family.

It is found in the cell membrane. Functionally, involved in the resistance (detoxification) of the fungal toxin fusaric acid. The sequence is that of Fusaric acid resistance protein FusC (fusC) from Burkholderia cepacia (Pseudomonas cepacia).